We begin with the raw amino-acid sequence, 226 residues long: ATP synthase subunit a (226 aa).

Helical transmembrane passes span 17 to 37, 79 to 99, 105 to 125, 134 to 154, 176 to 196, and 199 to 219; these read FSYF…AMMA, LVAT…IPGF, SLNL…FEGI, FAHF…IEIV, LFLM…AYVL, and FMAF…LAGA.

Belongs to the ATPase A chain family. In terms of assembly, F-type ATPases have 2 components, CF(1) - the catalytic core - and CF(0) - the membrane proton channel. CF(1) has five subunits: alpha(3), beta(3), gamma(1), delta(1), epsilon(1). CF(0) has three main subunits: a(1), b(2) and c(9-12). The alpha and beta chains form an alternating ring which encloses part of the gamma chain. CF(1) is attached to CF(0) by a central stalk formed by the gamma and epsilon chains, while a peripheral stalk is formed by the delta and b chains.

The protein resides in the cell inner membrane. In terms of biological role, key component of the proton channel; it plays a direct role in the translocation of protons across the membrane. In Campylobacter jejuni subsp. jejuni serotype O:6 (strain 81116 / NCTC 11828), this protein is ATP synthase subunit a.